The following is a 73-amino-acid chain: Protein WFDC10B (73 aa).

An N-terminal signal peptide occupies residues 1–21; sequence MAPQTLLLVLVLCVLLLQAQG. Residues 28–73 enclose the WAP domain; that stretch reads RMQRIKVCEKRPSIDLCIHHCSYFQKCETNKICCSAFCGNICMSIL.

Ubiquitously expressed.

The protein resides in the secreted. The polypeptide is Protein WFDC10B (WFDC10B) (Homo sapiens (Human)).